A 641-amino-acid polypeptide reads, in one-letter code: Tetracycline resistance protein TetQ (641 aa).

The 244-residue stretch at 1–244 folds into the tr-type G domain; sequence MNIINLGILA…AITSFILPPA (244 aa). GTP is bound by residues 10-17, 74-78, and 128-131; these read AHIDAGKT, DTPGH, and NKID.

It belongs to the TRAFAC class translation factor GTPase superfamily. Classic translation factor GTPase family. TetM/TetO subfamily.

Abolishes the inhibitory effect of tetracyclin on protein synthesis by a non-covalent modification of the ribosomes. The protein is Tetracycline resistance protein TetQ (tetQ) of Bacteroides thetaiotaomicron.